The primary structure comprises 293 residues: 4-hydroxybenzoate octaprenyltransferase (293 aa).

8 helical membrane passes run F41–I61, T98–L118, T122–F142, L145–V165, E167–Y187, I218–Q238, W241–T261, and A272–Y292.

This sequence belongs to the UbiA prenyltransferase family. Requires Mg(2+) as cofactor.

It is found in the cell inner membrane. The enzyme catalyses all-trans-octaprenyl diphosphate + 4-hydroxybenzoate = 4-hydroxy-3-(all-trans-octaprenyl)benzoate + diphosphate. The protein operates within cofactor biosynthesis; ubiquinone biosynthesis. Catalyzes the prenylation of para-hydroxybenzoate (PHB) with an all-trans polyprenyl group. Mediates the second step in the final reaction sequence of ubiquinone-8 (UQ-8) biosynthesis, which is the condensation of the polyisoprenoid side chain with PHB, generating the first membrane-bound Q intermediate 3-octaprenyl-4-hydroxybenzoate. The protein is 4-hydroxybenzoate octaprenyltransferase of Actinobacillus pleuropneumoniae serotype 5b (strain L20).